The chain runs to 406 residues: Argininosuccinate synthase (406 aa).

ATP is bound by residues 10-18 (AYSGGLDTS) and A37. Residues Y88 and S93 each coordinate L-citrulline. Position 118 (G118) interacts with ATP. Residues T120, N124, and D125 each contribute to the L-aspartate site. Residue N124 coordinates L-citrulline. L-citrulline is bound by residues R128, S179, S188, E264, and Y276.

The protein belongs to the argininosuccinate synthase family. Type 1 subfamily. In terms of assembly, homotetramer.

It is found in the cytoplasm. The enzyme catalyses L-citrulline + L-aspartate + ATP = 2-(N(omega)-L-arginino)succinate + AMP + diphosphate + H(+). The protein operates within amino-acid biosynthesis; L-arginine biosynthesis; L-arginine from L-ornithine and carbamoyl phosphate: step 2/3. The sequence is that of Argininosuccinate synthase from Dinoroseobacter shibae (strain DSM 16493 / NCIMB 14021 / DFL 12).